The sequence spans 172 residues: 3-hydroxydecanoyl-[acyl-carrier-protein] dehydratase (172 aa).

His-71 is an active-site residue.

The protein belongs to the thioester dehydratase family. FabA subfamily. Homodimer.

It localises to the cytoplasm. It catalyses the reaction a (3R)-hydroxyacyl-[ACP] = a (2E)-enoyl-[ACP] + H2O. It carries out the reaction (3R)-hydroxydecanoyl-[ACP] = (2E)-decenoyl-[ACP] + H2O. The catalysed reaction is (2E)-decenoyl-[ACP] = (3Z)-decenoyl-[ACP]. Its pathway is lipid metabolism; fatty acid biosynthesis. Functionally, necessary for the introduction of cis unsaturation into fatty acids. Catalyzes the dehydration of (3R)-3-hydroxydecanoyl-ACP to E-(2)-decenoyl-ACP and then its isomerization to Z-(3)-decenoyl-ACP. Can catalyze the dehydratase reaction for beta-hydroxyacyl-ACPs with saturated chain lengths up to 16:0, being most active on intermediate chain length. In Cronobacter sakazakii (strain ATCC BAA-894) (Enterobacter sakazakii), this protein is 3-hydroxydecanoyl-[acyl-carrier-protein] dehydratase.